The following is a 62-amino-acid chain: Large ribosomal subunit protein bL28 (62 aa).

Belongs to the bacterial ribosomal protein bL28 family.

The polypeptide is Large ribosomal subunit protein bL28 (Halalkalibacterium halodurans (strain ATCC BAA-125 / DSM 18197 / FERM 7344 / JCM 9153 / C-125) (Bacillus halodurans)).